The following is a 58-amino-acid chain: Large ribosomal subunit protein uL30 (58 aa).

It belongs to the universal ribosomal protein uL30 family. Part of the 50S ribosomal subunit.

The sequence is that of Large ribosomal subunit protein uL30 from Pseudomonas putida (strain ATCC 700007 / DSM 6899 / JCM 31910 / BCRC 17059 / LMG 24140 / F1).